The sequence spans 470 residues: ATP synthase subunit beta (470 aa).

Residue 156 to 163 (GGAGVGKT) coordinates ATP.

The protein belongs to the ATPase alpha/beta chains family. In terms of assembly, F-type ATPases have 2 components, CF(1) - the catalytic core - and CF(0) - the membrane proton channel. CF(1) has five subunits: alpha(3), beta(3), gamma(1), delta(1), epsilon(1). CF(0) has three main subunits: a(1), b(2) and c(9-12). The alpha and beta chains form an alternating ring which encloses part of the gamma chain. CF(1) is attached to CF(0) by a central stalk formed by the gamma and epsilon chains, while a peripheral stalk is formed by the delta and b chains.

The protein resides in the cell inner membrane. It catalyses the reaction ATP + H2O + 4 H(+)(in) = ADP + phosphate + 5 H(+)(out). Produces ATP from ADP in the presence of a proton gradient across the membrane. The catalytic sites are hosted primarily by the beta subunits. The sequence is that of ATP synthase subunit beta from Thermosipho africanus (strain TCF52B).